The sequence spans 527 residues: Acyl-coenzyme A thioesterase 4, mitochondrial (527 aa).

A mitochondrion-targeting transit peptide spans 1 to 75 (MMTPIGIRIR…FLFDPPPIRF (75 aa)). 2 HotDog ACOT-type domains span residues 172–294 (ILYN…RDSK) and 370–487 (KDTC…GPEA).

This sequence belongs to the acyl coenzyme A hydrolase family. As to expression, mostly expressed at low levels in glandular trichomes (lupulin glands), and, to a lower extent, in stems, leaves, flowers and cones.

It localises to the mitochondrion. It carries out the reaction 2-methylpropanoyl-CoA + H2O = 2-methylpropanoate + CoA + H(+). The catalysed reaction is propanoyl-CoA + H2O = propanoate + CoA + H(+). It catalyses the reaction octanoyl-CoA + H2O = octanoate + CoA + H(+). The enzyme catalyses butanoyl-CoA + H2O = butanoate + CoA + H(+). It carries out the reaction 3-methylbutanoyl-CoA + H2O = 3-methylbutanoate + CoA + H(+). The catalysed reaction is 2-methylbutanoyl-CoA + H2O = 2-methylbutanoate + CoA + H(+). In terms of biological role, acyl-CoA thioesterases are a group of enzymes that catalyze the hydrolysis of acyl-CoAs to the free fatty acid and coenzyme A (CoASH), providing the potential to regulate intracellular levels of acyl-CoAs, free fatty acids and CoASH. Active on acyl CoAs with short chains (propanoyl-CoA and butanoyl-CoA), branched short chains (2-methylpropanoyl-CoA, 2-methylbutanoyl-CoA and 3-methylbutanoyl-CoA) and medium chains (octanoyl-CoA). The polypeptide is Acyl-coenzyme A thioesterase 4, mitochondrial (Humulus lupulus (European hop)).